Consider the following 188-residue polypeptide: Elongation factor P (188 aa).

Belongs to the elongation factor P family.

Its subcellular location is the cytoplasm. The protein operates within protein biosynthesis; polypeptide chain elongation. Involved in peptide bond synthesis. Stimulates efficient translation and peptide-bond synthesis on native or reconstituted 70S ribosomes in vitro. Probably functions indirectly by altering the affinity of the ribosome for aminoacyl-tRNA, thus increasing their reactivity as acceptors for peptidyl transferase. The chain is Elongation factor P from Ralstonia nicotianae (strain ATCC BAA-1114 / GMI1000) (Ralstonia solanacearum).